Here is a 258-residue protein sequence, read N- to C-terminus: Aquaporin PIP1-2 (258 aa).

Residues 1-37 form a disordered region; sequence MEGKEEDVRLGANKFTERQPIGTAAQSQDKDYKEPPP. The Cytoplasmic portion of the chain corresponds to 1–55; the sequence is MEGKEEDVRLGANKFTERQPIGTAAQSQDKDYKEPPPAPLFEPGELSSWSFYRAG. Residues 56-76 form a helical membrane-spanning segment; sequence IAEFVATFLFLYITILTVMGV. The Extracellular portion of the chain corresponds to 77–89; that stretch reads VKSSTKCSTVGIQ. Residues 90-110 form a helical membrane-spanning segment; the sequence is GIAWAFGGMIFALVYCTAGIS. Residues 111–133 lie on the Cytoplasmic side of the membrane; it reads GGHINPAVTFGLFLARKLSLTRA. The NPA 1 motif lies at 115-117; it reads NPA. A helical transmembrane segment spans residues 134–154; the sequence is LFYMVMQCLGAICGAGVVKGF. Topologically, residues 155–175 are extracellular; the sequence is QKGLYENNGGGANVVAPGYTK. Residues 176 to 196 form a helical membrane-spanning segment; the sequence is GDGLGAEIVGTFILVYTVFSA. Over 197–209 the chain is Cytoplasmic; it reads TDAKRSARDSHVP. Residues 210–230 traverse the membrane as a helical segment; it reads ILAPLPIGFAVFLVHLATIPI. Over 231–258 the chain is Extracellular; sequence TGTGINPARSLGAAIIYNKGHAWDDHWI. The NPA 2 signature appears at 236 to 238; sequence NPA.

The protein belongs to the MIP/aquaporin (TC 1.A.8) family. PIP (TC 1.A.8.11) subfamily. Barely detectable in roots, leaves and fruits.

Its subcellular location is the cell membrane. Its function is as follows. Water channel required to facilitate the transport of water across cell membrane; mercury-insensitive. Contributes to the tolerance to multiple abiotic stresses including salt (NaCl), cold and water deprivation, by modulating cytosolic K(+)/Na(+) ratio, maintaining osmotic balance, and reducing membrane injury (e.g. oxidative injury). This Musa acuminata (Banana) protein is Aquaporin PIP1-2.